The sequence spans 250 residues: Cobalt transport protein CbiM (250 aa).

Residues 1 to 24 (MKYWGTALLGAFCVFFFTPNTAYA) form the signal peptide. The next 6 membrane-spanning stretches (helical) occupy residues 32–52 (LPAG…FWGI), 67–87 (MLLG…IPSV), 99–119 (LGAI…VLLF), 122–142 (LLLA…MGVM), 161–181 (VAVF…TSLQ), and 203–223 (IFAI…VFVF).

This sequence belongs to the CbiM family. In terms of assembly, forms an energy-coupling factor (ECF) transporter complex composed of an ATP-binding protein (A component, CbiO), a transmembrane protein (T component, CbiQ) and 2 possible substrate-capture proteins (S components, CbiM and CbiN) of unknown stoichimetry.

Its subcellular location is the cell membrane. The protein operates within cofactor biosynthesis; adenosylcobalamin biosynthesis. Functionally, part of the energy-coupling factor (ECF) transporter complex CbiMNOQ involved in cobalt import. This is Cobalt transport protein CbiM from Desulforamulus reducens (strain ATCC BAA-1160 / DSM 100696 / MI-1) (Desulfotomaculum reducens).